The primary structure comprises 218 residues: Glutathione S-transferase Mu 1 (218 aa).

Residues 2-88 form the GST N-terminal domain; it reads PMTLGYWDIR…YIARKHNLCG (87 aa). Glutathione is bound at residue 7 to 8; it reads YW. A Phosphothreonine modification is found at Thr-34. Residues 43–46, Lys-50, 59–60, and 72–73 contribute to the glutathione site; these read RSQW, NL, and QS. The GST C-terminal domain maps to 90 to 208; the sequence is TEEEKIRVDI…KSSRFLPKPL (119 aa). Tyr-116 is a binding site for substrate.

It belongs to the GST superfamily. Mu family. As to quaternary structure, homodimer.

Its subcellular location is the cytoplasm. The catalysed reaction is RX + glutathione = an S-substituted glutathione + a halide anion + H(+). The enzyme catalyses prostaglandin A2 + glutathione = prostaglandin A2-S-(R)-glutathione. It catalyses the reaction prostaglandin J2 + glutathione = prostaglandin J2-S-(R)-glutathione. It carries out the reaction prostaglandin J2 + glutathione = prostaglandin J2-S-(S)-glutathione. The catalysed reaction is prostaglandin A2 + glutathione = prostaglandin A2-S-(S)-glutathione. The enzyme catalyses 11(S)-hydroxy-14(S),15(S)-epoxy-(5Z,8Z,12E)-eicosatrienoate + glutathione = (11S,15S)-dihydroxy-14(R)-S-glutathionyl-(5Z,8Z,12E)-eicosatrienoate. Functionally, conjugation of reduced glutathione to a wide number of exogenous and endogenous hydrophobic electrophiles. Involved in the formation of glutathione conjugates of both prostaglandin A2 (PGA2) and prostaglandin J2 (PGJ2). Participates in the formation of novel hepoxilin regioisomers. In Macaca fascicularis (Crab-eating macaque), this protein is Glutathione S-transferase Mu 1 (GSTM1).